We begin with the raw amino-acid sequence, 245 residues long: 1-(5-phosphoribosyl)-5-[(5-phosphoribosylamino)methylideneamino] imidazole-4-carboxamide isomerase (245 aa).

The Proton acceptor role is filled by Asp7. The active-site Proton donor is the Asp129.

It belongs to the HisA/HisF family.

It localises to the cytoplasm. It carries out the reaction 1-(5-phospho-beta-D-ribosyl)-5-[(5-phospho-beta-D-ribosylamino)methylideneamino]imidazole-4-carboxamide = 5-[(5-phospho-1-deoxy-D-ribulos-1-ylimino)methylamino]-1-(5-phospho-beta-D-ribosyl)imidazole-4-carboxamide. It functions in the pathway amino-acid biosynthesis; L-histidine biosynthesis; L-histidine from 5-phospho-alpha-D-ribose 1-diphosphate: step 4/9. This Proteus mirabilis (strain HI4320) protein is 1-(5-phosphoribosyl)-5-[(5-phosphoribosylamino)methylideneamino] imidazole-4-carboxamide isomerase.